The primary structure comprises 534 residues: uncharacterized protein (534 aa).

5 helical membrane passes run 4–22 (ILVL…RVSF), 24–46 (GISL…GWTI), 56–75 (ALFV…RGLA), 82–104 (AITG…RLLG), and 134–156 (PAAV…VLFV). Residues 167 to 187 (GDSDGTDSASETSGQSSAEIA) form a disordered region. Residues 172-187 (TDSASETSGQSSAEIA) show a composition bias toward polar residues. 2 RCK C-terminal domains span residues 180–264 (GQSS…TLGE) and 265–349 (LQDT…AVGH). The next 6 helical transmembrane spans lie at 359-378 (LLSL…LSLQ), 382-401 (FSMS…ILGH), 408-430 (IRGS…LFLA), 445-467 (MERG…LVGF), 479-501 (WQSL…LTGA), and 511-533 (YVAA…VELI).

The protein belongs to the AAE transporter (TC 2.A.81) family.

The protein localises to the cell membrane. This is an uncharacterized protein from Rhodopirellula baltica (strain DSM 10527 / NCIMB 13988 / SH1).